Reading from the N-terminus, the 156-residue chain is Small ribosomal subunit protein uS7 (156 aa).

It belongs to the universal ribosomal protein uS7 family. As to quaternary structure, part of the 30S ribosomal subunit. Contacts proteins S9 and S11.

Functionally, one of the primary rRNA binding proteins, it binds directly to 16S rRNA where it nucleates assembly of the head domain of the 30S subunit. Is located at the subunit interface close to the decoding center, probably blocks exit of the E-site tRNA. This chain is Small ribosomal subunit protein uS7, found in Acidobacterium capsulatum (strain ATCC 51196 / DSM 11244 / BCRC 80197 / JCM 7670 / NBRC 15755 / NCIMB 13165 / 161).